A 319-amino-acid polypeptide reads, in one-letter code: Pre T-cell antigen receptor alpha (319 aa).

The first 16 residues, methionine 1–alanine 16, serve as a signal peptide directing secretion. Residues leucine 17–arginine 160 are Extracellular-facing. Cysteine 58 and cysteine 118 form a disulfide bridge. N-linked (GlcNAc...) asparagine glycosylation is present at asparagine 78. A helical transmembrane segment spans residues leucine 161–glycine 181. The Cytoplasmic portion of the chain corresponds to arginine 182–glycine 319. Residues alanine 189 to proline 207 are compositionally biased toward low complexity. Residues alanine 189–serine 293 are disordered. The span at arginine 260–arginine 271 shows a compositional bias: basic residues.

In terms of assembly, heterodimer with TCRB; disulfide linked. This heterodimer assembles with CD3 proteins into a signaling-competent pre-T-cell receptor complex. Interacts with RHBDD1.

The protein resides in the membrane. It localises to the cell membrane. Component of the pre-T-cell receptor complex (composed of PTCRA, TCRB and the CD3 complex) that has a crucial role in early T-cell development, particularly alpha-beta T cell differentiation. The protein is Pre T-cell antigen receptor alpha (PTCRA) of Bos taurus (Bovine).